Reading from the N-terminus, the 294-residue chain is Glyceraldehyde-3-phosphate dehydrogenase (294 aa).

NAD(+)-binding residues include Asp-19, Lys-63, and Thr-105. D-glyceraldehyde 3-phosphate is bound by residues 134-136, Thr-165, 194-195, and Arg-217; these read SCT and TG. Residue Cys-135 is the Nucleophile of the active site.

Belongs to the glyceraldehyde-3-phosphate dehydrogenase family. Homotetramer.

The protein localises to the cytoplasm. The enzyme catalyses D-glyceraldehyde 3-phosphate + phosphate + NAD(+) = (2R)-3-phospho-glyceroyl phosphate + NADH + H(+). It participates in carbohydrate degradation; glycolysis; pyruvate from D-glyceraldehyde 3-phosphate: step 1/5. Functionally, catalyzes the oxidative phosphorylation of glyceraldehyde 3-phosphate (G3P) to 1,3-bisphosphoglycerate (BPG) using the cofactor NAD. The first reaction step involves the formation of a hemiacetal intermediate between G3P and a cysteine residue, and this hemiacetal intermediate is then oxidized to a thioester, with concomitant reduction of NAD to NADH. The reduced NADH is then exchanged with the second NAD, and the thioester is attacked by a nucleophilic inorganic phosphate to produce BPG. In Serratia odorifera, this protein is Glyceraldehyde-3-phosphate dehydrogenase (gap).